The primary structure comprises 218 residues: uncharacterized protein (218 aa).

This is an uncharacterized protein from Acanthamoeba polyphaga (Amoeba).